The chain runs to 104 residues: ATP-dependent Clp protease adapter protein ClpS (104 aa).

Belongs to the ClpS family. In terms of assembly, binds to the N-terminal domain of the chaperone ClpA.

In terms of biological role, involved in the modulation of the specificity of the ClpAP-mediated ATP-dependent protein degradation. In Burkholderia thailandensis (strain ATCC 700388 / DSM 13276 / CCUG 48851 / CIP 106301 / E264), this protein is ATP-dependent Clp protease adapter protein ClpS.